The sequence spans 308 residues: Transaldolase (308 aa).

Catalysis depends on Lys125, which acts as the Schiff-base intermediate with substrate.

Belongs to the transaldolase family. Type 1 subfamily. Homodimer.

The protein resides in the cytoplasm. It catalyses the reaction D-sedoheptulose 7-phosphate + D-glyceraldehyde 3-phosphate = D-erythrose 4-phosphate + beta-D-fructose 6-phosphate. It participates in carbohydrate degradation; pentose phosphate pathway; D-glyceraldehyde 3-phosphate and beta-D-fructose 6-phosphate from D-ribose 5-phosphate and D-xylulose 5-phosphate (non-oxidative stage): step 2/3. Transaldolase is important for the balance of metabolites in the pentose-phosphate pathway. The protein is Transaldolase of Stutzerimonas stutzeri (strain A1501) (Pseudomonas stutzeri).